A 458-amino-acid polypeptide reads, in one-letter code: Histone acetyltransferase KAT8 (458 aa).

Composition is skewed to low complexity over residues 1–17 (MAAQGATAAVAATTSGT) and 25–35 (PGENAAVEGPA). Positions 1-52 (MAAQGATAAVAATTSGTVGEGEPGPGENAAVEGPARSPGRVSPPTPARGEPE) are disordered. The residue at position 2 (alanine 2) is an N-acetylalanine. Residues serine 37 and serine 42 each carry the phosphoserine modification. The Tudor-knot domain maps to 55–110 (VEIGETYLCRRPDSTWHSAEVIQSRVNDQEGREEFYVHYVGFNRRLDEWVDKNRLA). Position 113 is an N6-acetyllysine (lysine 113). The Nuclear localization signal signature appears at 140-149 (RNQKRKHDEI). The MYST-type HAT domain occupies 174-447 (TKVKYVDKIH…VDSVCLKWAP (274 aa)). Residues 174 to 458 (TKVKYVDKIH…KHKQVKLSKK (285 aa)) are sufficient for interaction with KANSL1. The C2HC MYST-type zinc finger occupies 207–232 (LWLCEYCLKYMKFEKSYRFHLGQCQW). Cysteine 210, cysteine 213, histidine 226, and cysteine 230 together coordinate Zn(2+). Position 274 is an N6-acetyllysine (lysine 274). Acetyl-CoA-binding residues include isoleucine 317, threonine 319, arginine 325, arginine 326, glycine 327, glycine 329, and lysine 330. Position 348 is a phosphoserine (serine 348). Glutamate 350 functions as the Proton donor/acceptor in the catalytic mechanism. Residues serine 354, serine 363, tyrosine 408, and lysine 432 each contribute to the acetyl-CoA site.

This sequence belongs to the MYST (SAS/MOZ) family. Component of a multisubunit histone acetyltransferase complex (MSL) at least composed of the MOF/KAT8, MSL1/hampin, MSL2L1 and MSL3L1. Component of the NSL complex at least composed of MOF/KAT8, KANSL1, KANSL2, KANSL3, MCRS1, PHF20, OGT1/OGT, WDR5 and HCFC1. Component of some MLL1/MLL complex, at least composed of the core components KMT2A/MLL1, ASH2L, HCFC1, WDR5 and RBBP5, as well as the facultative components BACC1, CHD8, E2F6, HSP70, INO80C, KANSL1, LAS1L, MAX, MCRS1, MGA, MOF/KAT8, PELP1, PHF20, PRP31, RING2, RUVB1/TIP49A, RUVB2/TIP49B, SENP3, TAF1, TAF4, TAF6, TAF7, TAF9 and TEX10. Interacts with the chromodomain of MORF4L1/MRG15. Interacts with ATM (via its Tudor-knot domain); possibly regulating the activity of ATM. Interacts with NELFD. Post-translationally, acetylation at Lys-274 facilitates cognate substrate Lys-binding and acetylation. Although considered as an autoacetylation event, acetylation at Lys-274 probably takes place via a non-enzymatic process following acetyl-CoA-binding, which primes KAT8 for cognate protein-lysine acetylation. During oocyte development, expressed in both oocytes and granulosa cells.

The protein resides in the nucleus. It localises to the chromosome. Its subcellular location is the mitochondrion. It carries out the reaction L-lysyl-[histone] + acetyl-CoA = N(6)-acetyl-L-lysyl-[histone] + CoA + H(+). The enzyme catalyses L-lysyl-[protein] + acetyl-CoA = N(6)-acetyl-L-lysyl-[protein] + CoA + H(+). It catalyses the reaction propanoyl-CoA + L-lysyl-[protein] = N(6)-propanoyl-L-lysyl-[protein] + CoA + H(+). The acetyltransferase activity is inhibited by anacardic acid derivatives. Functionally, histone acetyltransferase that catalyzes histone H4 acetylation at 'Lys-5'- and 'Lys-8' (H4K5ac and H4K8ac) or 'Lys-16' (H4K16ac), depending on the context. Catalytic component of the MSL histone acetyltransferase complex, a multiprotein complex that mediates the majority of histone H4 acetylation at 'Lys-16' (H4K16ac), an epigenetic mark that prevents chromatin compaction. H4K16ac constitutes the only acetylation mark intergenerationally transmitted and regulates key biological processes, such as oogenesis, embryonic stem cell pluripotency, hematopoiesis or glucose metabolism. The MSL complex is required for chromosome stability and genome integrity by maintaining homeostatic levels of H4K16ac. The MSL complex is also involved in gene dosage by promoting up-regulation of genes expressed by the X chromosome. X up-regulation is required to compensate for autosomal biallelic expression. The MSL complex also participates in gene dosage compensation by promoting expression of Tsix non-coding RNA. As part of the NSL histone acetyltransferase complex, catalyzes histone H4 acetylation at 'Lys-5'- and 'Lys-8' (H4K5ac and H4K8ac) at transcription start sites and promotes transcription initiation. The NSL complex also acts as a regulator of gene expression in mitochondria: KAT8 associates with mitochondrial DNA and controls expression of respiratory genes in an acetyltransferase-dependent mechanism. Also functions as an acetyltransferase for non-histone targets, such as ALKBH5, COX17, IRF3, KDM1A/LSD1, LMNA, PAX7 or TP53/p53. Acts as an inhibitor of antiviral immunity by acetylating IRF3, preventing IRF3 recruitment to promoters. Acts as a regulator of asymmetric division in muscle stem cells by mediating acetylation of PAX7. As part of the NSL complex, acetylates TP53/p53 at 'Lys-120'. Acts as a regulator of epithelial-to-mesenchymal transition as part of the NSL complex by mediating acetylation of KDM1A/LSD1. The NSL complex is required for nuclear architecture maintenance by mediating acetylation of LMNA. Promotes mitochondrial integrity by catalyzing acetylation of COX17. In addition to protein acetyltransferase activity, able to mediate protein propionylation. This chain is Histone acetyltransferase KAT8, found in Mus musculus (Mouse).